The sequence spans 451 residues: Cobyrinate a,c-diamide synthase (451 aa).

Residues 246 to 437 (KIGVAYDEVF…VHTHVAAMPN (192 aa)) form the GATase cobBQ-type domain. Cys328 acts as the Nucleophile in catalysis.

The protein belongs to the CobB/CbiA family. Mg(2+) serves as cofactor.

The enzyme catalyses cob(II)yrinate + 2 L-glutamine + 2 ATP + 2 H2O = cob(II)yrinate a,c diamide + 2 L-glutamate + 2 ADP + 2 phosphate + 2 H(+). It carries out the reaction Ni-sirohydrochlorin + 2 L-glutamine + 2 ATP + 2 H2O = Ni-sirohydrochlorin a,c-diamide + 2 L-glutamate + 2 ADP + 2 phosphate + 2 H(+). It participates in cofactor biosynthesis; adenosylcobalamin biosynthesis; cob(II)yrinate a,c-diamide from sirohydrochlorin (anaerobic route): step 10/10. Catalyzes the ATP-dependent amidation of the two carboxylate groups at positions a and c of cobyrinate, using either L-glutamine or ammonia as the nitrogen source. Involved in the biosynthesis of the unique nickel-containing tetrapyrrole coenzyme F430, the prosthetic group of methyl-coenzyme M reductase (MCR), which plays a key role in methanogenesis and anaerobic methane oxidation. Catalyzes the ATP-dependent amidation of the two carboxylate groups at positions a and c of Ni-sirohydrochlorin, using L-glutamine or ammonia as the nitrogen source. The polypeptide is Cobyrinate a,c-diamide synthase (Methanobrevibacter smithii (strain ATCC 35061 / DSM 861 / OCM 144 / PS)).